The following is a 1876-amino-acid chain: Phenolphthiocerol/phthiocerol polyketide synthase subunit A (1876 aa).

An N-acetylthreonine modification is found at T2. One can recognise a Carrier 1 domain in the interval 9 to 83 (ADLRHWLIDY…ALAAYLAAPE (75 aa)). Residue S43 is modified to O-(pantetheine 4'-phosphoryl)serine. Residues 101 to 526 (DEPIAVVGMG…GTNAHVVIEQ (426 aa)) enclose the Ketosynthase family 3 (KS3) domain. Catalysis depends on for beta-ketoacyl synthase activity residues C273, H408, and H448. The interval 626-950 (SPGPGTVFVY…NLNKAHTIHP (325 aa)) is acyltransferase. The active-site For malonyltransferase activity is S720. Residues 997 to 1112 (HTTVATVSAS…AQLSSSPSDS (116 aa)) form an N-terminal hotdog fold region. The region spanning 997–1267 (HTTVATVSAS…YRALDFGLDV (271 aa)) is the PKS/mFAS DH domain. H1027 functions as the Proton acceptor; for dehydratase activity in the catalytic mechanism. Residues 1102–1130 (TAQLSSSPSDSASSLNEHHRANGQPPERA) form a disordered region. The segment covering 1106–1115 (SSSPSDSASS) has biased composition (low complexity). The tract at residues 1130 to 1267 (AHRDLIPDLA…YRALDFGLDV (138 aa)) is C-terminal hotdog fold. D1186 serves as the catalytic Proton donor; for dehydratase activity. 1491–1551 (AAYLITGGLG…RRRIDAIRAL (61 aa)) contacts NADP(+). A beta-ketoacyl reductase region spans residues 1491-1728 (AAYLITGGLG…DGYDVAQAVV (238 aa)). In terms of domain architecture, Carrier 2 spans 1759–1836 (EVRSELEQGL…SLASYLAKRV (78 aa)). The residue at position 1796 (S1796) is an O-(pantetheine 4'-phosphoryl)serine.

NADP(+) serves as cofactor. Pantetheine 4'-phosphate is required as a cofactor.

It carries out the reaction icosanoyl-[(phenol)carboxyphthiodiolenone synthase] + 2 (S)-methylmalonyl-CoA + 3 malonyl-CoA + 5 NADPH + 10 H(+) = C32-carboxyphthiodiolenone-[(phenol)carboxyphthiodiolenone synthase] + 5 CO2 + 5 NADP(+) + 5 CoA + 2 H2O. It catalyses the reaction docosanoyl-[(phenol)carboxyphthiodiolenone synthase] + 2 (S)-methylmalonyl-CoA + 3 malonyl-CoA + 5 NADPH + 10 H(+) = C34-carboxyphthiodiolenone-[(phenol)carboxyphthiodiolenone synthase] + 5 CO2 + 5 NADP(+) + 5 CoA + 2 H2O. The catalysed reaction is 17-(4-hydroxyphenyl)heptadecanoyl-[(phenol)carboxyphthiodiolenone synthase] + 2 (S)-methylmalonyl-CoA + 3 malonyl-CoA + 5 NADPH + 10 H(+) = C35-(phenol)carboxyphthiodiolenone-[(phenol)carboxyphthiodiolenone synthase] + 5 CO2 + 5 NADP(+) + 5 CoA + 2 H2O. The enzyme catalyses 19-(4-hydroxyphenyl)nonadecanoyl-[(phenol)carboxyphthiodiolenone synthase] + 2 (S)-methylmalonyl-CoA + 3 malonyl-CoA + 5 NADPH + 10 H(+) = C37-(phenol)carboxyphthiodiolenone-[(phenol)carboxyphthiodiolenone synthase] + 5 CO2 + 5 NADP(+) + 5 CoA + 2 H2O. It functions in the pathway lipid metabolism; fatty acid biosynthesis. In terms of biological role, part of the PpsABCDE complex involved in the biosynthesis of the lipid core common to phthiocerols and phenolphthiocerols by successive additions of malonyl-CoA or methylmalonyl-CoA extender units. PpsA can accept as substrate the activated forms of either icosanoyl (C20), docosanoyl (C22) or lignoceroyl (C24) groups from FadD26, or a (4-hydroxyphenyl)-C17 or (4-hydroxyphenyl)-C19 fatty acyl from FadD29. PpsA initiates the biosynthesis and extends its substrate using a malonyl-CoA extender unit. The PpsB and PpsC proteins add the second and third malonyl-CoA extender units. PpsD adds an (R)-methylmalonyl unit and PpsE adds a second (R)-methylmalonyl unit. The incorporation of the methylmalonyl units results in formation of two branched methyl groups in the elongated product. This is Phenolphthiocerol/phthiocerol polyketide synthase subunit A (ppsA) from Mycobacterium tuberculosis (strain ATCC 25618 / H37Rv).